The primary structure comprises 130 residues: Glycoprotein hormone beta-5 (130 aa).

Residues 1–24 (MKLVYLVLGAVALLLLGGPDSVLS) form the signal peptide. 5 cysteine pairs are disulfide-bonded: C36–C84, C50–C99, C60–C115, C64–C117, and C120–C127. N-linked (GlcNAc...) asparagine glycosylation occurs at N87.

This sequence belongs to the glycoprotein hormones subunit beta family. In terms of assembly, heterodimer with GPHA2; this heterodimer interacts with thyroid-stimulating hormone receptor (TSHR), and hence stimulates cAMP production. In terms of processing, N-glycosylated. As to expression, expressed in the anterior lobe of pituitary.

Its subcellular location is the secreted. Functionally, functions as a heterodimeric glycoprotein hormone with GPHA2 able to bind and activate the thyroid-stimulating hormone receptor (TSHR), leading to increased cAMP production. Plays a central role in controlling thyroid cell metabolism. This chain is Glycoprotein hormone beta-5 (Gphb5), found in Mus musculus (Mouse).